Here is a 634-residue protein sequence, read N- to C-terminus: Threonine--tRNA ligase (634 aa).

Positions 1-142 are editing domain; sequence MQLLLIHSDY…LSRSIRPEGA (142 aa). A catalytic region spans residues 214 to 513; that stretch reads PHVELMRRLE…TEEGKVPMLP (300 aa). 3 residues coordinate Zn(2+): cysteine 306, histidine 358, and histidine 482.

The protein belongs to the class-II aminoacyl-tRNA synthetase family. Homodimer. The cofactor is Zn(2+).

The protein localises to the cytoplasm. The enzyme catalyses tRNA(Thr) + L-threonine + ATP = L-threonyl-tRNA(Thr) + AMP + diphosphate + H(+). Catalyzes the attachment of threonine to tRNA(Thr) in a two-step reaction: L-threonine is first activated by ATP to form Thr-AMP and then transferred to the acceptor end of tRNA(Thr). Edits incorrectly charged L-seryl-tRNA(Thr) probably via its editing domain (tested with total bovine tRNA). Activates L-serine, but does not detectably transfer it to tRNA (tested with total bovine tRNA). In Methanosarcina mazei (strain ATCC BAA-159 / DSM 3647 / Goe1 / Go1 / JCM 11833 / OCM 88) (Methanosarcina frisia), this protein is Threonine--tRNA ligase.